We begin with the raw amino-acid sequence, 79 residues long: RNA-binding protein Hfq (79 aa).

Residues 10–70 (DVFLNTVRKQ…ISTIMPGQPV (61 aa)) form the Sm domain.

This sequence belongs to the Hfq family. As to quaternary structure, homohexamer.

Its function is as follows. RNA chaperone that binds small regulatory RNA (sRNAs) and mRNAs to facilitate mRNA translational regulation in response to envelope stress, environmental stress and changes in metabolite concentrations. Also binds with high specificity to tRNAs. The protein is RNA-binding protein Hfq of Bartonella quintana (strain Toulouse) (Rochalimaea quintana).